A 175-amino-acid chain; its full sequence is Ribosome maturation factor RimM (175 aa).

Residues 98–175 form the PRC barrel domain; it reads EGEYYWHQLE…EMRVDWDADF (78 aa).

Belongs to the RimM family. As to quaternary structure, binds ribosomal protein uS19.

It localises to the cytoplasm. In terms of biological role, an accessory protein needed during the final step in the assembly of 30S ribosomal subunit, possibly for assembly of the head region. Essential for efficient processing of 16S rRNA. May be needed both before and after RbfA during the maturation of 16S rRNA. It has affinity for free ribosomal 30S subunits but not for 70S ribosomes. The sequence is that of Ribosome maturation factor RimM from Pseudomonas aeruginosa (strain UCBPP-PA14).